Consider the following 158-residue polypeptide: Mitotic-spindle organizing protein 2 (158 aa).

A Phosphoserine modification is found at serine 34. Residues 81-158 form a disordered region; the sequence is AGQRVASDSQ…PGRSPPRSGT (78 aa). Residues 110–119 show a composition bias toward gly residues; sequence KGGGALGGGP. At serine 152 the chain carries Phosphoserine.

Belongs to the MOZART2 family. As to quaternary structure, associates with the gamma-tubulin ring complex (gTuRC) consisting of TUBGCP2, TUBGCP3, TUBGCP4, TUBGCP5 and TUBGCP6 and gamma-tubulin TUBG1 or TUBG2; within the complex, interacts with TUBGCP2; the interaction plays a role in gTuRC activation.

The protein resides in the cytoplasm. It is found in the cytoskeleton. The protein localises to the microtubule organizing center. Its subcellular location is the centrosome. It localises to the spindle. Functionally, required for the recruitment and the assembly of the gamma-tubulin ring complex (gTuRC) at the centrosome. The gTuRC regulates the minus-end nucleation of alpha-beta tubulin heterodimers that grow into microtubule protafilaments, a critical step in centrosome duplication and spindle formation. In Bos taurus (Bovine), this protein is Mitotic-spindle organizing protein 2 (MZT2).